The primary structure comprises 420 residues: Tryptophan synthase beta chain (420 aa).

At lysine 100 the chain carries N6-(pyridoxal phosphate)lysine.

It belongs to the TrpB family. In terms of assembly, tetramer of two alpha and two beta chains. Pyridoxal 5'-phosphate serves as cofactor.

The enzyme catalyses (1S,2R)-1-C-(indol-3-yl)glycerol 3-phosphate + L-serine = D-glyceraldehyde 3-phosphate + L-tryptophan + H2O. The protein operates within amino-acid biosynthesis; L-tryptophan biosynthesis; L-tryptophan from chorismate: step 5/5. Its function is as follows. The beta subunit is responsible for the synthesis of L-tryptophan from indole and L-serine. The polypeptide is Tryptophan synthase beta chain (Pyrobaculum islandicum (strain DSM 4184 / JCM 9189 / GEO3)).